Consider the following 1032-residue polypeptide: FACT complex subunit ctc-2 (1032 aa).

A disordered region spans residues 446 to 513; the sequence is DEEEAQPTPK…QKEGLAKYAE (68 aa). Over residues 476–508 the composition is skewed to basic and acidic residues; it reads LRSERNTTVDEDADKRRREHQKELAQKKQKEGL. 4 coiled-coil regions span residues 485–506, 624–658, 785–805, and 949–1010; these read DEDA…KQKE, DRYA…EQDK, RRRR…IAEA, and EVEE…RKAK. The tract at residues 943–1032 is disordered; sequence NDSDDDEVEE…ERAAPKKRRK (90 aa). Acidic residues-rich tracts occupy residues 944-979 and 986-1004; these read DSDD…DSEY and EASD…DWDE.

The protein belongs to the peptidase M24 family. SPT16 subfamily. In terms of assembly, forms a stable heterodimer with ctc-1/pob3. The dimer of ctc-1 and ctc-2 weakly associates with multiple molecules of nhp-1/nhp6 to form the FACT complex.

It is found in the nucleus. Its subcellular location is the chromosome. Component of the FACT complex, a general chromatin factor that acts to reorganize nucleosomes. The FACT complex is involved in multiple processes that require DNA as a template such as mRNA elongation, DNA replication and DNA repair. During transcription elongation the FACT complex acts as a histone chaperone that both destabilizes and restores nucleosomal structure. It facilitates the passage of RNA polymerase II and transcription by promoting the dissociation of one histone H2A-H2B dimer from the nucleosome, then subsequently promotes the reestablishment of the nucleosome following the passage of RNA polymerase II. The sequence is that of FACT complex subunit ctc-2 (ctc-2) from Neurospora crassa (strain ATCC 24698 / 74-OR23-1A / CBS 708.71 / DSM 1257 / FGSC 987).